Here is a 79-residue protein sequence, read N- to C-terminus: Sec-independent protein translocase protein TatA (79 aa).

Residues 1 to 21 (MGSFSIWHWLIVLAIVVLVFG) form a helical membrane-spanning segment. Positions 43 to 79 (VKDGSTSTDTPAAAPGQVAGQTAADKTTIDVEAKQKG) are disordered. A compositionally biased stretch (basic and acidic residues) spans 69-79 (TTIDVEAKQKG).

This sequence belongs to the TatA/E family. In terms of assembly, the Tat system comprises two distinct complexes: a TatABC complex, containing multiple copies of TatA, TatB and TatC subunits, and a separate TatA complex, containing only TatA subunits. Substrates initially bind to the TatABC complex, which probably triggers association of the separate TatA complex to form the active translocon.

The protein resides in the cell inner membrane. Part of the twin-arginine translocation (Tat) system that transports large folded proteins containing a characteristic twin-arginine motif in their signal peptide across membranes. TatA could form the protein-conducting channel of the Tat system. The chain is Sec-independent protein translocase protein TatA from Delftia acidovorans (strain DSM 14801 / SPH-1).